The sequence spans 1372 residues: DNA-directed RNA polymerase subunit beta' (1372 aa).

Zn(2+) is bound by residues Cys69, Cys71, Cys84, and Cys87. Asp460, Asp462, and Asp464 together coordinate Mg(2+). The Zn(2+) site is built by Cys808, Cys882, Cys889, and Cys892.

The protein belongs to the RNA polymerase beta' chain family. As to quaternary structure, the RNAP catalytic core consists of 2 alpha, 1 beta, 1 beta' and 1 omega subunit. When a sigma factor is associated with the core the holoenzyme is formed, which can initiate transcription. It depends on Mg(2+) as a cofactor. Zn(2+) is required as a cofactor.

It carries out the reaction RNA(n) + a ribonucleoside 5'-triphosphate = RNA(n+1) + diphosphate. In terms of biological role, DNA-dependent RNA polymerase catalyzes the transcription of DNA into RNA using the four ribonucleoside triphosphates as substrates. The chain is DNA-directed RNA polymerase subunit beta' from Rickettsia prowazekii (strain Madrid E).